The chain runs to 597 residues: Blastula protease 10 (597 aa).

The N-terminal stretch at 1-16 (MKLILFLSGLVSLVLC) is a signal peptide. The propeptide at 17-93 (TLAAPTGDQK…DEMTGRKKRK (77 aa)) is activation peptide. A disordered region spans residues 24–67 (DQKEIHTETPPPKKPSETTTPGALKTPQPEPKDEEPTPGAFQGD). The Peptidase M12A domain maps to 93 to 294 (KATIYESQRW…ELANLIYECD (202 aa)). Cystine bridges form between C134–C293, C162–C182, C299–C315, C305–C317, C319–C328, C339–C365, C392–C412, C484–C510, and C537–C557. H190 is a binding site for Zn(2+). E191 is an active-site residue. 2 residues coordinate Zn(2+): H194 and H200. The region spanning 295–329 (DIEDCAGANECLNGGYHDTECNCVCPSGYNGDLCE) is the EGF-like domain. 2 CUB domains span residues 339 to 449 (CSER…YRIV) and 484 to 595 (CGGS…YRAI).

It depends on Zn(2+) as a cofactor.

Its subcellular location is the cytoplasm. The protein resides in the perinuclear region. The protein localises to the cell cortex. It is found in the secreted. It localises to the extracellular space. Functionally, could be involved in the differentiation of ectodermal lineages and subsequent patterning of the embryo. This Paracentrotus lividus (Common sea urchin) protein is Blastula protease 10 (BP10).